The primary structure comprises 198 residues: Large ribosomal subunit protein bL21 (198 aa).

The protein belongs to the bacterial ribosomal protein bL21 family. Part of the 50S ribosomal subunit. Contacts protein L20.

In terms of biological role, this protein binds to 23S rRNA in the presence of protein L20. The chain is Large ribosomal subunit protein bL21 from Ruegeria sp. (strain TM1040) (Silicibacter sp.).